The sequence spans 460 residues: V-type ATP synthase beta chain (460 aa).

Belongs to the ATPase alpha/beta chains family.

Produces ATP from ADP in the presence of a proton gradient across the membrane. The V-type beta chain is a regulatory subunit. The protein is V-type ATP synthase beta chain of Clostridium novyi (strain NT).